A 434-amino-acid chain; its full sequence is 3-phosphoshikimate 1-carboxyvinyltransferase (434 aa).

Residues Lys22, Ser23, and Arg27 each coordinate 3-phosphoshikimate. Lys22 serves as a coordination point for phosphoenolpyruvate. Phosphoenolpyruvate-binding residues include Gly93 and Arg121. 3-phosphoshikimate-binding residues include Ser168, Ser169, Gln170, Ser199, Asp320, and Lys347. Residue Gln170 coordinates phosphoenolpyruvate. Asp320 (proton acceptor) is an active-site residue. Arg351, Arg394, and Lys419 together coordinate phosphoenolpyruvate.

It belongs to the EPSP synthase family. In terms of assembly, monomer.

The protein localises to the cytoplasm. The catalysed reaction is 3-phosphoshikimate + phosphoenolpyruvate = 5-O-(1-carboxyvinyl)-3-phosphoshikimate + phosphate. The protein operates within metabolic intermediate biosynthesis; chorismate biosynthesis; chorismate from D-erythrose 4-phosphate and phosphoenolpyruvate: step 6/7. In terms of biological role, catalyzes the transfer of the enolpyruvyl moiety of phosphoenolpyruvate (PEP) to the 5-hydroxyl of shikimate-3-phosphate (S3P) to produce enolpyruvyl shikimate-3-phosphate and inorganic phosphate. This is 3-phosphoshikimate 1-carboxyvinyltransferase from Burkholderia vietnamiensis (strain G4 / LMG 22486) (Burkholderia cepacia (strain R1808)).